A 750-amino-acid chain; its full sequence is Photosystem I P700 chlorophyll a apoprotein A1 (750 aa).

8 helical membrane-spanning segments follow: residues 70–93 (VFSAHFGQLSIIFLWLSGMYFHGA), 156–179 (LYCTAIGALVFAALMLFAGWFHYH), 195–219 (LNHHLAGLLGLGSLSWAGHQVHVSL), 291–309 (IAHHHLAIAILFLIAGHMY), 346–369 (WHAQLSLNLAMLGSLTIVVAHHMY), 385–411 (LSLFTHHMWIGGFLIVGAAAHAAIFMV), 433–455 (AIISHLNWACIFLGFHSFGLYIH), and 531–549 (FLVHHIHAFTIHVTVLILL). Cysteine 573 and cysteine 582 together coordinate [4Fe-4S] cluster. Helical transmembrane passes span 589–610 (HVFLGLFWMYNSISVVIFHFSW) and 664–686 (LSAYGLFFLGAHFVWAFSLMFLF). Residue histidine 675 participates in chlorophyll a' binding. 2 residues coordinate chlorophyll a: methionine 683 and tyrosine 691. A phylloquinone-binding site is contributed by tryptophan 692. Residues 724–744 (AVGVTHYLLGGIATTWAFFLA) form a helical membrane-spanning segment.

This sequence belongs to the PsaA/PsaB family. The PsaA/B heterodimer binds the P700 chlorophyll special pair and subsequent electron acceptors. PSI consists of a core antenna complex that captures photons, and an electron transfer chain that converts photonic excitation into a charge separation. The eukaryotic PSI reaction center is composed of at least 11 subunits. Requires P700 is a chlorophyll a/chlorophyll a' dimer, A0 is one or more chlorophyll a, A1 is one or both phylloquinones and FX is a shared 4Fe-4S iron-sulfur center. as cofactor.

It localises to the plastid. Its subcellular location is the chloroplast thylakoid membrane. The catalysed reaction is reduced [plastocyanin] + hnu + oxidized [2Fe-2S]-[ferredoxin] = oxidized [plastocyanin] + reduced [2Fe-2S]-[ferredoxin]. In terms of biological role, psaA and PsaB bind P700, the primary electron donor of photosystem I (PSI), as well as the electron acceptors A0, A1 and FX. PSI is a plastocyanin-ferredoxin oxidoreductase, converting photonic excitation into a charge separation, which transfers an electron from the donor P700 chlorophyll pair to the spectroscopically characterized acceptors A0, A1, FX, FA and FB in turn. Oxidized P700 is reduced on the lumenal side of the thylakoid membrane by plastocyanin. This Vitis vinifera (Grape) protein is Photosystem I P700 chlorophyll a apoprotein A1.